The primary structure comprises 744 residues: MEHIYQYSWIMPFIPLPVPMLIGVGLLLFPTTTKHLRRIWAFPTLFLLGLVMLLSAYFFILQLNKSYIYQYVWSWTINNDFSLEFGHLVDPLTSIMSILITTVGITVLIYSEKYMFHDQGYLRFFSYMTLFHVSMLGLVTSSNLIQIYICWEFVGMFSYLLIGFWFTRPVAANACQKAFVTNRVGDFSFLLGILGLYWITGSFEFRDLFEIFYNLVHNNEIPFFFLTLCAFLLFGGALAKSAQFPLHVWLPDAMEGPTPISALIHAATMVAAGIFLVARLLPLFIVMPYILNLISFIGIITVFLGATLALSQKDIKRGLAYSTMSQLGYMMLALGMGSYRAALFHLITHAYSKALLFLGAGSIIHSMEAFVGYSPEKSQNMVLMGGLIKHMPITKTSFLLGTLSLCGIPPLACFWSKDSILNDSWLYSPIFAIIACSTTGFTAFYMFRIYLLTFEGHLNVHFRNYSGKRSNSFYSISLWGNEGPKTLQKKKGFKTLLTMNNKKGVTFFCKKIDRIDSSVRNMTRLFTHFEAKNTLPYPHESDNTMLFPMVLLVLFTLFVGAIGIPFNQEDKNLDILSKFLTPSINLLHEKSNNSVDWYEFIPNATLSVSLSYFGIVIASVLYKPNYLSLTKLNLLNLFVKGGPNKIFGDRIRNRIYDWSYNRGYIDTFYAISLARGLRGFAEFTHFFDARVIDGITNGMGILSFFLGEGIKCVGGGRLSSYLLLYFDCVLLFLFISSFLYLFHF.

The next 16 membrane-spanning stretches (helical) occupy residues 9-29 (WIMP…LLLF), 41-61 (AFPT…FFIL), 89-109 (VDPL…TVLI), 125-145 (FSYM…SNLI), 147-167 (IYIC…FWFT), 185-205 (GDFS…SFEF), 219-239 (NEIP…GALA), 258-278 (TPIS…FLVA), 280-300 (LLPL…IGII), 327-347 (LGYM…FHLI), 354-374 (ALLF…VGYS), 396-416 (TSFL…CFWS), 425-445 (WLYS…TAFY), 546-566 (LFPM…GIPF), 600-620 (FIPN…IASV), and 722-742 (LLLY…LYLF).

This sequence belongs to the complex I subunit 5 family. In terms of assembly, NDH is composed of at least 16 different subunits, 5 of which are encoded in the nucleus.

Its subcellular location is the plastid. The protein localises to the chloroplast thylakoid membrane. It catalyses the reaction a plastoquinone + NADH + (n+1) H(+)(in) = a plastoquinol + NAD(+) + n H(+)(out). It carries out the reaction a plastoquinone + NADPH + (n+1) H(+)(in) = a plastoquinol + NADP(+) + n H(+)(out). In terms of biological role, NDH shuttles electrons from NAD(P)H:plastoquinone, via FMN and iron-sulfur (Fe-S) centers, to quinones in the photosynthetic chain and possibly in a chloroplast respiratory chain. The immediate electron acceptor for the enzyme in this species is believed to be plastoquinone. Couples the redox reaction to proton translocation, and thus conserves the redox energy in a proton gradient. This Pelargonium hortorum (Common geranium) protein is NAD(P)H-quinone oxidoreductase subunit 5, chloroplastic (ndhF).